A 96-amino-acid polypeptide reads, in one-letter code: U-stichotoxin-Hau2b (96 aa).

The signal sequence occupies residues 1–18; that stretch reads MKPIFIVALLFSTCLVNA. Propeptides lie at residues 19–29 and 30–33; these read KPSIDDAEMKR and EPKP. 2 disulfides stabilise this stretch: Cys-40-Cys-51 and Cys-43-Cys-58. Propeptides lie at residues 62–64 and 65–68; these read RKR and EPKP. Disulfide bonds link Cys-75–Cys-86 and Cys-78–Cys-93.

This sequence belongs to the sea anemone BBH family.

The protein localises to the secreted. The protein resides in the nematocyst. Neurotoxin that paralyzes freshwater crabs at high concentration. The chain is U-stichotoxin-Hau2b from Heteractis aurora (Banded sea anemone).